A 343-amino-acid chain; its full sequence is Anthranilate phosphoribosyltransferase (343 aa).

Residues Gly-84, 87–88 (GD), Thr-92, 94–97 (NIST), 112–120 (KHGNRGVSS), and Ser-124 each bind 5-phospho-alpha-D-ribose 1-diphosphate. Residue Gly-84 participates in anthranilate binding. Residue Ser-96 participates in Mg(2+) binding. Residue Asn-115 coordinates anthranilate. Arg-170 provides a ligand contact to anthranilate. Asp-229 and Glu-230 together coordinate Mg(2+).

Belongs to the anthranilate phosphoribosyltransferase family. In terms of assembly, homodimer. Requires Mg(2+) as cofactor.

The enzyme catalyses N-(5-phospho-beta-D-ribosyl)anthranilate + diphosphate = 5-phospho-alpha-D-ribose 1-diphosphate + anthranilate. The protein operates within amino-acid biosynthesis; L-tryptophan biosynthesis; L-tryptophan from chorismate: step 2/5. Functionally, catalyzes the transfer of the phosphoribosyl group of 5-phosphorylribose-1-pyrophosphate (PRPP) to anthranilate to yield N-(5'-phosphoribosyl)-anthranilate (PRA). This is Anthranilate phosphoribosyltransferase from Burkholderia cenocepacia (strain ATCC BAA-245 / DSM 16553 / LMG 16656 / NCTC 13227 / J2315 / CF5610) (Burkholderia cepacia (strain J2315)).